Consider the following 190-residue polypeptide: Potassium-transporting ATPase KdpC subunit (190 aa).

A helical transmembrane segment spans residues Thr-10 to Gly-30.

It belongs to the KdpC family. In terms of assembly, the system is composed of three essential subunits: KdpA, KdpB and KdpC.

The protein localises to the cell inner membrane. Its function is as follows. Part of the high-affinity ATP-driven potassium transport (or Kdp) system, which catalyzes the hydrolysis of ATP coupled with the electrogenic transport of potassium into the cytoplasm. This subunit acts as a catalytic chaperone that increases the ATP-binding affinity of the ATP-hydrolyzing subunit KdpB by the formation of a transient KdpB/KdpC/ATP ternary complex. The sequence is that of Potassium-transporting ATPase KdpC subunit from Escherichia coli (strain K12 / MC4100 / BW2952).